The following is a 334-amino-acid chain: MKTLGEFIIEKQAEYPEAKGELSGILSSIRLAAKIIHREINRAGLSQDILGVAGSENIQGEAQMKLDVFANETMKKALLAREEVAGFASEEDDNFVAFENDRAKNAKYILMTDPLDGSSNIDVNVSVGTIFSIYKRVSPIGSPVTMEDFLQEGRKQVASGYVTYGSSTMLVYTTGNGVNGFTYDPSLGLFILSHPDMKIPTEGKYYSINEGQYVTFPMGVKKFIKYCQESDEATKRPYSSRYIGSLVSDFHRNLLKGGIYIYPTSTVYPKGKLRLLYEGNPMAFLAEQAGGMATDGFNPILDIKPSELHQRVPFFVGSTSMVKQADKFMQECAE.

Mg(2+) is bound by residues E90, D113, L115, and D116. Substrate-binding positions include 116–119, N209, Y242, and K272; that span reads DGSS. Mg(2+) is bound at residue E278.

This sequence belongs to the FBPase class 1 family. As to quaternary structure, homotetramer. The cofactor is Mg(2+).

Its subcellular location is the cytoplasm. It carries out the reaction beta-D-fructose 1,6-bisphosphate + H2O = beta-D-fructose 6-phosphate + phosphate. Its pathway is carbohydrate biosynthesis; gluconeogenesis. This chain is Fructose-1,6-bisphosphatase class 1, found in Actinobacillus pleuropneumoniae serotype 5b (strain L20).